The sequence spans 194 residues: Segregation and condensation protein B (194 aa).

Belongs to the ScpB family. As to quaternary structure, homodimer. Homodimerization may be required to stabilize the binding of ScpA to the Smc head domains. Component of a cohesin-like complex composed of ScpA, ScpB and the Smc homodimer, in which ScpA and ScpB bind to the head domain of Smc. The presence of the three proteins is required for the association of the complex with DNA.

It is found in the cytoplasm. Its function is as follows. Participates in chromosomal partition during cell division. May act via the formation of a condensin-like complex containing Smc and ScpA that pull DNA away from mid-cell into both cell halves. The sequence is that of Segregation and condensation protein B from Brevibacillus brevis (strain 47 / JCM 6285 / NBRC 100599).